The primary structure comprises 189 residues: Potassium-transporting ATPase KdpC subunit (189 aa).

A helical membrane pass occupies residues 10 to 30 (VIFAMLTLICGVIYPYAITGI).

Belongs to the KdpC family. As to quaternary structure, the system is composed of three essential subunits: KdpA, KdpB and KdpC.

Its subcellular location is the cell inner membrane. Its function is as follows. Part of the high-affinity ATP-driven potassium transport (or Kdp) system, which catalyzes the hydrolysis of ATP coupled with the electrogenic transport of potassium into the cytoplasm. This subunit acts as a catalytic chaperone that increases the ATP-binding affinity of the ATP-hydrolyzing subunit KdpB by the formation of a transient KdpB/KdpC/ATP ternary complex. The protein is Potassium-transporting ATPase KdpC subunit of Janthinobacterium sp. (strain Marseille) (Minibacterium massiliensis).